The sequence spans 373 residues: MHNESPIKRRKSTRIYVGNVPVGDGAPIAVQSMTNTRTTDVEATVKQIKSLERVGVDIVRVSIPTMDAAEAFKLIKQQANVPLVADIHFDYRIALKVAEYGVDCLRINPGNIGNEARIREVVAAARDKNIPIRIGVNGGSLEKDIQEKYGEPTPEALLESAMRHVDILNRLNFDQFKISVKASDVFLAVGAYRLLAQEIEQPLHLGITEAGGARAGSVKSAIGLGILLSEGIGDTLRISLAADPVEEVKVGFDILKALRIRSRGINFIACPTCSRQEFDVIGTVNALEQRLEDLLTPMDVSIIGCVVNGPGEAEVSTLGVTGARTKSGFYEDGIRQKVRLDNADMIDQLEAKIRAKASMLDENKRIGISQLDK.

Residues cysteine 270, cysteine 273, cysteine 305, and glutamate 312 each contribute to the [4Fe-4S] cluster site.

This sequence belongs to the IspG family. The cofactor is [4Fe-4S] cluster.

It carries out the reaction (2E)-4-hydroxy-3-methylbut-2-enyl diphosphate + oxidized [flavodoxin] + H2O + 2 H(+) = 2-C-methyl-D-erythritol 2,4-cyclic diphosphate + reduced [flavodoxin]. It functions in the pathway isoprenoid biosynthesis; isopentenyl diphosphate biosynthesis via DXP pathway; isopentenyl diphosphate from 1-deoxy-D-xylulose 5-phosphate: step 5/6. In terms of biological role, converts 2C-methyl-D-erythritol 2,4-cyclodiphosphate (ME-2,4cPP) into 1-hydroxy-2-methyl-2-(E)-butenyl 4-diphosphate. This chain is 4-hydroxy-3-methylbut-2-en-1-yl diphosphate synthase (flavodoxin), found in Photorhabdus laumondii subsp. laumondii (strain DSM 15139 / CIP 105565 / TT01) (Photorhabdus luminescens subsp. laumondii).